Consider the following 358-residue polypeptide: SPbeta prophage-derived probable integrase/recombinase YopP (358 aa).

The Core-binding (CB) domain occupies 23-114; sequence NKDIRSSSGN…SLKMLYTYLE (92 aa). The 183-residue stretch at 137-319 folds into the Tyr recombinase domain; it reads KNWDKTTQTE…NIANSAGVTM (183 aa). Catalysis depends on residues R178, K206, H268, and H295. Y304 acts as the O-(3'-phospho-DNA)-tyrosine intermediate in catalysis.

It belongs to the 'phage' integrase family.

Its function is as follows. Probable recombinase that does not seem to have a role in chromosome dimer resolution per se but rather may have some facilitative role during chromosome partitioning in general. The sequence is that of SPbeta prophage-derived probable integrase/recombinase YopP (yopP) from Bacillus subtilis (strain 168).